A 217-amino-acid chain; its full sequence is GTP cyclohydrolase 1 (217 aa).

C109, H112, and C180 together coordinate Zn(2+).

The protein belongs to the GTP cyclohydrolase I family. In terms of assembly, toroid-shaped homodecamer, composed of two pentamers of five dimers.

It catalyses the reaction GTP + H2O = 7,8-dihydroneopterin 3'-triphosphate + formate + H(+). It participates in cofactor biosynthesis; 7,8-dihydroneopterin triphosphate biosynthesis; 7,8-dihydroneopterin triphosphate from GTP: step 1/1. The protein is GTP cyclohydrolase 1 of Vibrio campbellii (strain ATCC BAA-1116).